A 792-amino-acid chain; its full sequence is Phenylalanine--tRNA ligase beta subunit (792 aa).

The region spanning 39–147 is the tRNA-binding domain; it reads GESLGQVVVA…DDAPVGQALA (109 aa). The region spanning 400 to 475 is the B5 domain; it reads PQPARIRLRR…RIHGYDRVPT (76 aa). Residues Asp-453, Asp-459, Glu-462, and Glu-463 each coordinate Mg(2+). One can recognise an FDX-ACB domain in the interval 698 to 791; that stretch reads SRFPSVRRDL…IEREHRARIR (94 aa).

It belongs to the phenylalanyl-tRNA synthetase beta subunit family. Type 1 subfamily. In terms of assembly, tetramer of two alpha and two beta subunits. Requires Mg(2+) as cofactor.

Its subcellular location is the cytoplasm. The enzyme catalyses tRNA(Phe) + L-phenylalanine + ATP = L-phenylalanyl-tRNA(Phe) + AMP + diphosphate + H(+). The sequence is that of Phenylalanine--tRNA ligase beta subunit from Xanthomonas euvesicatoria pv. vesicatoria (strain 85-10) (Xanthomonas campestris pv. vesicatoria).